A 433-amino-acid polypeptide reads, in one-letter code: Tol-Pal system protein TolB (433 aa).

Residues 1 to 26 (MSLMTKLGFRALVASCLIAAGGAAHA) form the signal peptide.

This sequence belongs to the TolB family. As to quaternary structure, the Tol-Pal system is composed of five core proteins: the inner membrane proteins TolA, TolQ and TolR, the periplasmic protein TolB and the outer membrane protein Pal. They form a network linking the inner and outer membranes and the peptidoglycan layer.

The protein localises to the periplasm. Functionally, part of the Tol-Pal system, which plays a role in outer membrane invagination during cell division and is important for maintaining outer membrane integrity. This is Tol-Pal system protein TolB from Burkholderia pseudomallei (strain 1710b).